Reading from the N-terminus, the 637-residue chain is Transcription termination factor FttA (637 aa).

Residues 4 to 71 (EDVLLDLKHK…IAMRPDPRVL (68 aa)) are KHa. The segment at 72 to 139 (ATPEDSISII…WIPKVVRTPP (68 aa)) is KHb. The interval 180–383 (WVRVTALGGC…VISEATYGNA (204 aa)) is metallo-beta-lactamase N-terminus. Zn(2+) is bound by residues His-242, His-244, Asp-246, His-247, His-329, and Asp-352. Residues 384 to 578 (NAFQPALKDA…MEVQVVDGFS (195 aa)) are beta-Casp. Residues 579–637 (GHSDRRQLMEYVKRMQPRPERVFTEHGDEKACVDLASSVYKKLKIETRALTNLETVRLL) form a metallo-beta-lactamase C-terminus region. His-604 contributes to the Zn(2+) binding site.

This sequence belongs to the metallo-beta-lactamase superfamily. RNA-metabolizing metallo-beta-lactamase-like family. FttA subfamily. Homodimer. Interacts with RNA polymerase (RNAP), interacts with the Spt4-Spt5 complex. Zn(2+) is required as a cofactor.

Functionally, terminates transcription on the whole genome. Termination is linked to FttA-mediated RNA cleavage and does not require NTP hydrolysis. Cleaves endonucleolytically at the RNA exit channel of RNA polymerase (RNAP); the 5'-3' exonuclease activity of this protein degrades the nascent RNA released from RNAP. This is Transcription termination factor FttA from Methanosarcina mazei (strain ATCC BAA-159 / DSM 3647 / Goe1 / Go1 / JCM 11833 / OCM 88) (Methanosarcina frisia).